The following is a 68-amino-acid chain: ATP synthase protein 8 (68 aa).

A helical transmembrane segment spans residues 8–24; it reads TWLTIITPTLLALFLIT. At Lys-54 the chain carries N6-acetyllysine; alternate. Lys-54 is modified (N6-succinyllysine; alternate). Lys-57 carries the post-translational modification N6-acetyllysine.

The protein belongs to the ATPase protein 8 family. F-type ATPases have 2 components, CF(1) - the catalytic core - and CF(0) - the membrane proton channel. Component of an ATP synthase complex composed of ATP5PB, ATP5MC1, ATP5F1E, ATP5PD, ATP5ME, ATP5PF, ATP5MF, MT-ATP6, MT-ATP8, ATP5F1A, ATP5F1B, ATP5F1D, ATP5F1C, ATP5PO, ATP5MG, ATP5MK and ATP5MJ. Interacts with PRICKLE3.

The protein localises to the mitochondrion membrane. Its function is as follows. Mitochondrial membrane ATP synthase (F(1)F(0) ATP synthase or Complex V) produces ATP from ADP in the presence of a proton gradient across the membrane which is generated by electron transport complexes of the respiratory chain. F-type ATPases consist of two structural domains, F(1) - containing the extramembraneous catalytic core and F(0) - containing the membrane proton channel, linked together by a central stalk and a peripheral stalk. During catalysis, ATP synthesis in the catalytic domain of F(1) is coupled via a rotary mechanism of the central stalk subunits to proton translocation. Part of the complex F(0) domain. Minor subunit located with subunit a in the membrane. This is ATP synthase protein 8 (MT-ATP8) from Pongo pygmaeus (Bornean orangutan).